The following is a 486-amino-acid chain: Cardiolipin synthase A (486 aa).

The next 2 membrane-spanning stretches (helical) occupy residues 3–23 (TFYT…IAGV) and 38–58 (MAWL…YLSF). PLD phosphodiesterase domains are found at residues 219-246 (MDLR…VDPR) and 399-426 (KDGL…DMRS). Catalysis depends on residues H224, K226, D231, H404, K406, and D411.

The protein belongs to the phospholipase D family. Cardiolipin synthase subfamily. ClsA sub-subfamily.

It localises to the cell inner membrane. It catalyses the reaction 2 a 1,2-diacyl-sn-glycero-3-phospho-(1'-sn-glycerol) = a cardiolipin + glycerol. In terms of biological role, catalyzes the reversible phosphatidyl group transfer from one phosphatidylglycerol molecule to another to form cardiolipin (CL) (diphosphatidylglycerol) and glycerol. This chain is Cardiolipin synthase A, found in Pectobacterium atrosepticum (strain SCRI 1043 / ATCC BAA-672) (Erwinia carotovora subsp. atroseptica).